The following is a 401-amino-acid chain: UPF0283 membrane protein SO_1811 (401 aa).

Positions 1-22 (MSVELLPHSTEPHANGADKSVS) are disordered. The next 3 membrane-spanning stretches (helical) occupy residues 99-119 (LARL…VLGL), 129-149 (LFSF…VGVI), and 239-259 (ESAV…IILW).

Belongs to the UPF0283 family.

Its subcellular location is the cell inner membrane. The polypeptide is UPF0283 membrane protein SO_1811 (Shewanella oneidensis (strain ATCC 700550 / JCM 31522 / CIP 106686 / LMG 19005 / NCIMB 14063 / MR-1)).